We begin with the raw amino-acid sequence, 166 residues long: Regulatory protein RecX (166 aa).

The protein belongs to the RecX family.

Its subcellular location is the cytoplasm. Modulates RecA activity. This Escherichia coli O7:K1 (strain IAI39 / ExPEC) protein is Regulatory protein RecX.